The primary structure comprises 415 residues: Transposase for insertion sequence element IS1081 (415 aa).

Belongs to the transposase mutator family.

Functionally, required for the transposition of the insertion element. The chain is Transposase for insertion sequence element IS1081 from Mycobacterium bovis (strain ATCC BAA-935 / AF2122/97).